A 118-amino-acid polypeptide reads, in one-letter code: Large ribosomal subunit protein bL20c (118 aa).

Belongs to the bacterial ribosomal protein bL20 family.

Its subcellular location is the plastid. It is found in the chloroplast. Its function is as follows. Binds directly to 23S ribosomal RNA and is necessary for the in vitro assembly process of the 50S ribosomal subunit. It is not involved in the protein synthesizing functions of that subunit. This chain is Large ribosomal subunit protein bL20c, found in Adiantum capillus-veneris (Maidenhair fern).